The primary structure comprises 279 residues: Tryptophan synthase alpha chain (279 aa).

Active-site proton acceptor residues include Glu50 and Asp61.

Belongs to the TrpA family. As to quaternary structure, tetramer of two alpha and two beta chains.

The catalysed reaction is (1S,2R)-1-C-(indol-3-yl)glycerol 3-phosphate + L-serine = D-glyceraldehyde 3-phosphate + L-tryptophan + H2O. The protein operates within amino-acid biosynthesis; L-tryptophan biosynthesis; L-tryptophan from chorismate: step 5/5. The alpha subunit is responsible for the aldol cleavage of indoleglycerol phosphate to indole and glyceraldehyde 3-phosphate. The protein is Tryptophan synthase alpha chain of Brucella anthropi (strain ATCC 49188 / DSM 6882 / CCUG 24695 / JCM 21032 / LMG 3331 / NBRC 15819 / NCTC 12168 / Alc 37) (Ochrobactrum anthropi).